A 206-amino-acid polypeptide reads, in one-letter code: Translocation protein SEC66 (206 aa).

At 1-27 (MSEFNETKFSNNGTFFETEEPIVETKS) the chain is on the lumenal side. N-linked (GlcNAc...) asparagine glycans are attached at residues N5 and N12. Residues 28–48 (ISVYTPLIYVFILVVSLVMFA) traverse the membrane as a helical; Signal-anchor for type II membrane protein segment. Residues 49–206 (SSYRKKQAKK…KINNDGRLVN (158 aa)) are Cytoplasmic-facing.

The protein to S.pombe SpBC409.21. Component of the heterotetrameric Sec62/63complex composed of SEC62, SEC63, SEC66 and SEC72. The Sec62/63 complex associates with the Sec61 complex to form the Sec complex. Part of a complex consisting of KAR2, SEC63, SEC66 and SEC72.

The protein resides in the endoplasmic reticulum membrane. Functionally, acts as a component of the Sec62/63 complex which is involved in SRP-independent post-translational translocation across the endoplasmic reticulum (ER) and functions together with the Sec61 complex and KAR2 in a channel-forming translocon complex. A cycle of assembly and disassembly of Sec62/63 complex from SEC61 may govern the activity of the translocon. SEC66 is required to attach or retain SEC72 in the SEC63 complex. It is essential for growth at elevated temperatures. The sequence is that of Translocation protein SEC66 (SEC66) from Saccharomyces cerevisiae (strain ATCC 204508 / S288c) (Baker's yeast).